Here is a 286-residue protein sequence, read N- to C-terminus: Protease HtpX homolog (286 aa).

Transmembrane regions (helical) follow at residues 7–27 (TFML…MIGG) and 29–49 (SGMM…YWFS). H131 is a Zn(2+) binding site. Residue E132 is part of the active site. Zn(2+) is bound at residue H135. A run of 2 helical transmembrane segments spans residues 146–166 (ISAT…FFGG) and 177–197 (IAGI…QMAI). Zn(2+) is bound at residue E202.

It belongs to the peptidase M48B family. Zn(2+) is required as a cofactor.

The protein resides in the cell inner membrane. The polypeptide is Protease HtpX homolog (Ralstonia pickettii (strain 12J)).